Reading from the N-terminus, the 326-residue chain is Peroxidase 6 (326 aa).

The first 20 residues, 1–20 (MKSFGLCLFILVSSPCLLQA), serve as a signal peptide directing secretion. Asparagine 21 carries an N-linked (GlcNAc...) asparagine glycan. Cystine bridges form between cysteine 31–cysteine 112, cysteine 64–cysteine 69, cysteine 118–cysteine 318, and cysteine 197–cysteine 228. Histidine 62 acts as the Proton acceptor in catalysis. Ca(2+)-binding residues include aspartate 63, valine 66, glycine 68, aspartate 70, and serine 72. Asparagine 163 carries N-linked (GlcNAc...) asparagine glycosylation. Histidine 190 is a binding site for heme b. Threonine 191 provides a ligand contact to Ca(2+). Residues asparagine 206 and asparagine 230 are each glycosylated (N-linked (GlcNAc...) asparagine). Aspartate 242, threonine 245, and aspartate 250 together coordinate Ca(2+). Residue asparagine 274 is glycosylated (N-linked (GlcNAc...) asparagine).

The protein belongs to the peroxidase family. Classical plant (class III) peroxidase subfamily. It depends on heme b as a cofactor. The cofactor is Ca(2+).

The protein resides in the secreted. The catalysed reaction is 2 a phenolic donor + H2O2 = 2 a phenolic radical donor + 2 H2O. Its function is as follows. Removal of H(2)O(2), oxidation of toxic reductants, biosynthesis and degradation of lignin, suberization, auxin catabolism, response to environmental stresses such as wounding, pathogen attack and oxidative stress. These functions might be dependent on each isozyme/isoform in each plant tissue. The sequence is that of Peroxidase 6 (PER6) from Arabidopsis thaliana (Mouse-ear cress).